The following is a 251-amino-acid chain: Imidazole glycerol phosphate synthase subunit HisF (251 aa).

Active-site residues include D11 and D130.

It belongs to the HisA/HisF family. In terms of assembly, heterodimer of HisH and HisF.

It is found in the cytoplasm. It catalyses the reaction 5-[(5-phospho-1-deoxy-D-ribulos-1-ylimino)methylamino]-1-(5-phospho-beta-D-ribosyl)imidazole-4-carboxamide + L-glutamine = D-erythro-1-(imidazol-4-yl)glycerol 3-phosphate + 5-amino-1-(5-phospho-beta-D-ribosyl)imidazole-4-carboxamide + L-glutamate + H(+). The protein operates within amino-acid biosynthesis; L-histidine biosynthesis; L-histidine from 5-phospho-alpha-D-ribose 1-diphosphate: step 5/9. Its function is as follows. IGPS catalyzes the conversion of PRFAR and glutamine to IGP, AICAR and glutamate. The HisF subunit catalyzes the cyclization activity that produces IGP and AICAR from PRFAR using the ammonia provided by the HisH subunit. This chain is Imidazole glycerol phosphate synthase subunit HisF, found in Phocaeicola vulgatus (strain ATCC 8482 / DSM 1447 / JCM 5826 / CCUG 4940 / NBRC 14291 / NCTC 11154) (Bacteroides vulgatus).